Consider the following 755-residue polypeptide: E3 ubiquitin-protein ligase TRIM56 (755 aa).

Residues 21-60 form an RING-type zinc finger; the sequence is CKICLEQLRAPKTLPCLHTYCQDCLAQLADGGRVRCPECR. 2 B box-type zinc fingers span residues 98–149 and 164–205; these read KPAC…VVDL and RQAA…CLPL. Zn(2+)-binding residues include C169, H172, C192, and H197. Residues 216–314 adopt a coiled-coil conformation; it reads LEGLLAGVDN…AAAFARRVLS (99 aa). The disordered stretch occupies residues 371–484; the sequence is EEQQPQKDGG…SPALGPNLDG (114 aa). Positions 392–404 are enriched in basic and acidic residues; that stretch reads SQSRREDEPKTER. T418 and T442 each carry phosphothreonine. Residues 419 to 447 show a composition bias toward basic and acidic residues; the sequence is PKEEKAQTTREEGAQTLEEDRAQTPHEDG. The span at 453–469 shows a compositional bias: basic residues; sequence RGGRPNKKKKFKGRLKS. S475 bears the Phosphoserine mark.

It belongs to the TRIM/RBCC family. Homooligomer. Interacts with STING1. Interacts with TICAM1. In terms of processing, (Microbial infection) Preferentially ubiquitinated with 'Lys-48' and 'Lys-11'-linked ubiquitin chains by Salmonella effector SopA leading to proteasomal targeting and degradation. Post-translationally, autoubiquitinated. In terms of tissue distribution, widely expressed (at protein level).

The protein resides in the cytoplasm. It catalyses the reaction S-ubiquitinyl-[E2 ubiquitin-conjugating enzyme]-L-cysteine + [acceptor protein]-L-lysine = [E2 ubiquitin-conjugating enzyme]-L-cysteine + N(6)-ubiquitinyl-[acceptor protein]-L-lysine.. It participates in protein modification; protein ubiquitination. Its function is as follows. E3 ubiquitin-protein ligase that plays a key role in innate antiviral immunity by mediating ubiquitination of CGAS and STING1. In response to pathogen- and host-derived double-stranded DNA (dsDNA), targets STING1 to 'Lys-63'-linked ubiquitination, thereby promoting its homodimerization, a step required for the production of type I interferon IFN-beta. Also mediate monoubiquitination of CGAS, thereby promoting CGAS oligomerization and subsequent activation. Promotes also TNFalpha-induced NF-kappa-B signaling by mediating 'Lys-63'-linked ubiquitination TAK1, leading to enhanced interaction between TAK1 and CHUK/IKKalpha. Independently of its E3 ubiquitin ligase activity, positive regulator of TLR3 signaling. Potentiates extracellular double stranded RNA (dsRNA)-induced expression of IFNB1 and interferon-stimulated genes ISG15, IFIT1/ISG56, CXCL10, OASL and CCL5/RANTES. Promotes establishment of an antiviral state by TLR3 ligand and TLR3-mediated chemokine induction following infection by hepatitis C virus. Acts as a restriction factor of Zika virus through direct interaction with the viral RNA via its C-terminal region. The chain is E3 ubiquitin-protein ligase TRIM56 from Homo sapiens (Human).